We begin with the raw amino-acid sequence, 97 residues long: Putative CC-type chemokine U83 (97 aa).

Disulfide bonds link Cys32-Cys62 and Cys33-Cys76.

This sequence belongs to the intercrine beta (chemokine CC) family. Highly divergent.

The protein is Putative CC-type chemokine U83 (U83) of Human herpesvirus 6A (strain Uganda-1102) (HHV-6 variant A).